A 158-amino-acid chain; its full sequence is Auxin-responsive protein IAA31 (158 aa).

Positions 1-40 (MEVSNSCSSFSSSSVDSTKPSPSESSVNLSLSLTFPSTSP) are enriched in low complexity. The disordered stretch occupies residues 1–49 (MEVSNSCSSFSSSSVDSTKPSPSESSVNLSLSLTFPSTSPQREARQDWP). Residues 29 to 33 (LSLSL) carry the EAR-like (transcriptional repression) motif. Residues 72 to 157 (SLFVKVYMEG…RRLKITRPER (86 aa)) form the PB1 domain.

It belongs to the Aux/IAA family. As to quaternary structure, homodimers and heterodimers.

Its subcellular location is the nucleus. In terms of biological role, aux/IAA proteins are short-lived transcriptional factors that function as repressors of early auxin response genes at low auxin concentrations. Repression is thought to result from the interaction with auxin response factors (ARFs), proteins that bind to the auxin-responsive promoter element (AuxRE). Formation of heterodimers with ARF proteins may alter their ability to modulate early auxin response genes expression. The sequence is that of Auxin-responsive protein IAA31 (IAA31) from Arabidopsis thaliana (Mouse-ear cress).